The primary structure comprises 261 residues: tRNA (guanine-N(7)-)-methyltransferase (261 aa).

S-adenosyl-L-methionine contacts are provided by glutamate 75, glutamate 100, aspartate 127, and aspartate 150. Residue aspartate 150 is part of the active site. Lysine 154 contacts substrate. An interaction with RNA region spans residues 156-161; that stretch reads RHNKRR. Substrate-binding positions include aspartate 186 and 223 to 226; that span reads THFE.

It belongs to the class I-like SAM-binding methyltransferase superfamily. TrmB family.

It carries out the reaction guanosine(46) in tRNA + S-adenosyl-L-methionine = N(7)-methylguanosine(46) in tRNA + S-adenosyl-L-homocysteine. Its pathway is tRNA modification; N(7)-methylguanine-tRNA biosynthesis. Functionally, catalyzes the formation of N(7)-methylguanine at position 46 (m7G46) in tRNA. The sequence is that of tRNA (guanine-N(7)-)-methyltransferase from Xanthomonas axonopodis pv. citri (strain 306).